Here is a 480-residue protein sequence, read N- to C-terminus: GTPase Obg (480 aa).

One can recognise an Obg domain in the interval 2-159 (TRFIDRVVIH…RDLTLELKTV (158 aa)). Residues 160-341 (ADVGLVGFPS…LTFALWDMVA (182 aa)) form the OBG-type G domain. GTP is bound by residues 166 to 173 (GFPSAGKS), 191 to 195 (FTTLA), 212 to 215 (DVPG), 292 to 295 (NKID), and 322 to 324 (STV). Residues serine 173 and threonine 193 each contribute to the Mg(2+) site. The 79-residue stretch at 359–437 (PIPVDETAFS…IGDMTFDWEP (79 aa)) folds into the OCT domain. The interval 441 to 480 (AGVDVPLTGRGTDVRLEQTDRVGADERKAARKARRQSGDE) is disordered. A compositionally biased stretch (basic and acidic residues) spans 452–468 (TDVRLEQTDRVGADERK). Residues 469–480 (AARKARRQSGDE) show a composition bias toward basic residues.

It belongs to the TRAFAC class OBG-HflX-like GTPase superfamily. OBG GTPase family. As to quaternary structure, monomer. Requires Mg(2+) as cofactor.

The protein localises to the cytoplasm. Functionally, an essential GTPase which binds GTP, GDP and possibly (p)ppGpp with moderate affinity, with high nucleotide exchange rates and a fairly low GTP hydrolysis rate. Plays a role in control of the cell cycle, stress response, ribosome biogenesis and in those bacteria that undergo differentiation, in morphogenesis control. The chain is GTPase Obg from Mycolicibacterium vanbaalenii (strain DSM 7251 / JCM 13017 / BCRC 16820 / KCTC 9966 / NRRL B-24157 / PYR-1) (Mycobacterium vanbaalenii).